A 782-amino-acid polypeptide reads, in one-letter code: Coiled-coil alpha-helical rod protein 1 (782 aa).

Composition is skewed to basic and acidic residues over residues 62–74 (ERDV…EPGR) and 208–218 (ETRRAGEAKEL). Disordered stretches follow at residues 62–82 (ERDV…WGLE) and 185–218 (AHKE…AKEL). Coiled-coil stretches lie at residues 82–314 (EGSQ…ELTR), 344–398 (LMVQ…EVER), and 498–691 (VTDV…QQEG).

The protein resides in the cytoplasm. It localises to the nucleus. Functionally, may be a regulator of keratinocyte proliferation or differentiation. The protein is Coiled-coil alpha-helical rod protein 1 (CCHCR1) of Gorilla gorilla gorilla (Western lowland gorilla).